The chain runs to 459 residues: Putrescine aminotransferase (459 aa).

Pyridoxal 5'-phosphate contacts are provided by residues Gly150–Thr151 and Gln274. Lys300 carries the N6-(pyridoxal phosphate)lysine modification. A pyridoxal 5'-phosphate-binding site is contributed by Thr332.

It belongs to the class-III pyridoxal-phosphate-dependent aminotransferase family. Putrescine aminotransferase subfamily. Pyridoxal 5'-phosphate is required as a cofactor.

It carries out the reaction an alkane-alpha,omega-diamine + 2-oxoglutarate = an omega-aminoaldehyde + L-glutamate. The enzyme catalyses putrescine + 2-oxoglutarate = 1-pyrroline + L-glutamate + H2O. The catalysed reaction is cadaverine + 2-oxoglutarate = 5-aminopentanal + L-glutamate. Its pathway is amine and polyamine degradation; putrescine degradation; 4-aminobutanal from putrescine (transaminase route): step 1/1. In terms of biological role, catalyzes the aminotransferase reaction from putrescine to 2-oxoglutarate, leading to glutamate and 4-aminobutanal, which spontaneously cyclizes to form 1-pyrroline. This is the first step in one of two pathways for putrescine degradation, where putrescine is converted into 4-aminobutanoate (gamma-aminobutyrate or GABA) via 4-aminobutanal. Also functions as a cadaverine transaminase in a a L-lysine degradation pathway to succinate that proceeds via cadaverine, glutarate and L-2-hydroxyglutarate. The chain is Putrescine aminotransferase from Escherichia coli O17:K52:H18 (strain UMN026 / ExPEC).